Here is a 465-residue protein sequence, read N- to C-terminus: Biotin biosynthesis bifunctional protein BioCD (465 aa).

Positions 1-254 (MTPFLPDRSI…AYGQWRKPRG (254 aa)) are malonyl-ACP O-methyltransferase. Residues Asp-234 and 263-268 (GVGKTL) each bind ATP. Positions 255–465 (VFVTGTDTGV…DSLLSSNASR (211 aa)) are DTB synthetase. Thr-267 lines the Mg(2+) pocket. Residue Lys-283 is part of the active site. Thr-287 is a substrate binding site. Residues Asp-295, 351 to 354 (EGAG), and 435 to 437 (PQL) contribute to the ATP site. Residues Asp-295 and Glu-351 each contribute to the Mg(2+) site.

It in the N-terminal section; belongs to the methyltransferase superfamily. The protein in the C-terminal section; belongs to the dethiobiotin synthetase family. Requires Mg(2+) as cofactor.

It is found in the cytoplasm. The enzyme catalyses (7R,8S)-7,8-diammoniononanoate + CO2 + ATP = (4R,5S)-dethiobiotin + ADP + phosphate + 3 H(+). The catalysed reaction is malonyl-[ACP] + S-adenosyl-L-methionine = malonyl-[ACP] methyl ester + S-adenosyl-L-homocysteine. The protein operates within cofactor biosynthesis; biotin biosynthesis; biotin from 7,8-diaminononanoate: step 1/2. It participates in cofactor biosynthesis; biotin biosynthesis. Converts the free carboxyl group of a malonyl-thioester to its methyl ester by transfer of a methyl group from S-adenosyl-L-methionine (SAM). It allows synthesis of pimeloyl-ACP via the fatty acid synthetic pathway. In terms of biological role, catalyzes a mechanistically unusual reaction, the ATP-dependent insertion of CO2 between the N7 and N8 nitrogen atoms of 7,8-diaminopelargonic acid (DAPA, also called 7,8-diammoniononanoate) to form a ureido ring. The protein is Biotin biosynthesis bifunctional protein BioCD of Bordetella avium (strain 197N).